The sequence spans 1372 residues: DNA-directed RNA polymerase subunit beta (1372 aa).

It belongs to the RNA polymerase beta chain family. The RNAP catalytic core consists of 2 alpha, 1 beta, 1 beta' and 1 omega subunit. When a sigma factor is associated with the core the holoenzyme is formed, which can initiate transcription.

The catalysed reaction is RNA(n) + a ribonucleoside 5'-triphosphate = RNA(n+1) + diphosphate. Its function is as follows. DNA-dependent RNA polymerase catalyzes the transcription of DNA into RNA using the four ribonucleoside triphosphates as substrates. The sequence is that of DNA-directed RNA polymerase subunit beta from Rickettsia bellii (strain OSU 85-389).